We begin with the raw amino-acid sequence, 299 residues long: Tyrosine recombinase XerD (299 aa).

The Core-binding (CB) domain occupies 2-89; sequence ETVNNNLQQF…AIRSFHQFLL (88 aa). Residues 110–293 enclose the Tyr recombinase domain; sequence RLPKALTIEE…TKTRMRDVYA (184 aa). Residues Arg150, Lys174, His245, Arg248, and His271 contribute to the active site. Catalysis depends on Tyr280, which acts as the O-(3'-phospho-DNA)-tyrosine intermediate.

Belongs to the 'phage' integrase family. XerD subfamily. In terms of assembly, forms a cyclic heterotetrameric complex composed of two molecules of XerC and two molecules of XerD.

It localises to the cytoplasm. Functionally, site-specific tyrosine recombinase, which acts by catalyzing the cutting and rejoining of the recombining DNA molecules. The XerC-XerD complex is essential to convert dimers of the bacterial chromosome into monomers to permit their segregation at cell division. It also contributes to the segregational stability of plasmids. This is Tyrosine recombinase XerD from Halalkalibacterium halodurans (strain ATCC BAA-125 / DSM 18197 / FERM 7344 / JCM 9153 / C-125) (Bacillus halodurans).